We begin with the raw amino-acid sequence, 294 residues long: tRNA pseudouridine synthase B (294 aa).

The active-site Nucleophile is aspartate 39.

Belongs to the pseudouridine synthase TruB family. Type 1 subfamily.

It catalyses the reaction uridine(55) in tRNA = pseudouridine(55) in tRNA. In terms of biological role, responsible for synthesis of pseudouridine from uracil-55 in the psi GC loop of transfer RNAs. The protein is tRNA pseudouridine synthase B of Streptococcus pyogenes serotype M3 (strain ATCC BAA-595 / MGAS315).